A 349-amino-acid chain; its full sequence is Homoserine O-succinyltransferase (349 aa).

Cysteine 146 functions as the Acyl-thioester intermediate in the catalytic mechanism. Positions 167 and 196 each coordinate substrate. Histidine 239 functions as the Proton acceptor in the catalytic mechanism. Glutamate 241 is a catalytic residue. Arginine 253 lines the substrate pocket.

It belongs to the MetA family.

Its subcellular location is the cytoplasm. The enzyme catalyses L-homoserine + succinyl-CoA = O-succinyl-L-homoserine + CoA. The protein operates within amino-acid biosynthesis; L-methionine biosynthesis via de novo pathway; O-succinyl-L-homoserine from L-homoserine: step 1/1. Transfers a succinyl group from succinyl-CoA to L-homoserine, forming succinyl-L-homoserine. In vitro, can also use glutaryl-CoA as acyl donor. The protein is Homoserine O-succinyltransferase of Thiobacillus denitrificans (strain ATCC 25259 / T1).